A 714-amino-acid chain; its full sequence is Choline transporter-like protein 5 (714 aa).

Topologically, residues 1–33 are cytoplasmic; sequence MGRRSAAPTSPFGEPRKFDPKFKGPIGKRHCTD. A helical transmembrane segment spans residues 34-54; it reads VLCCIIFVVVILGYIALGVVA. Residues 55 to 237 are Extracellular-facing; sequence WIHGDPRKII…KIFEDYASSW (183 aa). 4 N-linked (GlcNAc...) asparagine glycosylation sites follow: Asn-83, Asn-132, Asn-192, and Asn-205. The chain crosses the membrane as a helical span at residues 238–258; the sequence is YWILIALFIAMVVSLLFLILL. Residues 259–261 lie on the Cytoplasmic side of the membrane; it reads RFT. Residues 262–282 traverse the membrane as a helical segment; it reads AGVFFWIFIIGVIGVVGYGIW. Over 283–320 the chain is Extracellular; that stretch reads HCFWEYDSLKGVPGADLTIYDIGLQTDFRVYLQLRQTW. The helical transmembrane segment at 321–341 threads the bilayer; it reads LAFMILLCIVEVIIILMLIFL. Residues 342–346 lie on the Cytoplasmic side of the membrane; that stretch reads RNRIR. Residues 347 to 367 form a helical membrane-spanning segment; the sequence is IAIALLQEGSRAIGYIMSTLF. Residues 368 to 369 lie on the Extracellular side of the membrane; it reads YP. The helical transmembrane segment at 370–390 threads the bilayer; that stretch reads IITFILIAICISYWAVTAVFM. Residues 391-455 lie on the Cytoplasmic side of the membrane; it reads ATSGEPIYKV…QYILIFQLCN (65 aa). The helical transmembrane segment at 456-476 threads the bilayer; the sequence is VFVFLWLVNFSIALGQCTLAG. Residues 477 to 510 are Extracellular-facing; the sequence is AFASYYWAFKKPADIPACPLFSSFGRAIRYHTGS. A helical membrane pass occupies residues 511–531; the sequence is LALGSLILALVQFIRIILEYL. Residues 532 to 605 are Cytoplasmic-facing; sequence DHKLKASQNS…RVAVLDKVTD (74 aa). Residues 606–626 traverse the membrane as a helical segment; sequence FLLFLGKVFVTGSVGVLAFFF. At 627-644 the chain is on the extracellular side; the sequence is FTRKIPVLTDEAPALNYY. A helical transmembrane segment spans residues 645–665; it reads WVPLLTVLIGSYLIAHGFFSV. Residues 666–711 lie on the Cytoplasmic side of the membrane; the sequence is YAMCVDTLFLCFCEDLERNNGSSSKPYYMSPNLHRILGKKEILSKK.

This sequence belongs to the CTL (choline transporter-like) family.

Its subcellular location is the cell membrane. It catalyses the reaction choline(out) + n H(+)(in) = choline(in) + n H(+)(out). Its function is as follows. Choline/H+ antiporter. This chain is Choline transporter-like protein 5 (slc44a5), found in Xenopus tropicalis (Western clawed frog).